A 204-amino-acid chain; its full sequence is Somatotropin (204 aa).

Positions 1 to 17 are cleaved as a signal peptide; sequence MDRAVLLLSVLSLGVSS. Pyrrolidone carboxylic acid is present on Q18. Position 35 (H35) interacts with Zn(2+). A disulfide bond links C69 and C177. A Zn(2+)-binding site is contributed by E186. A disulfide bond links C194 and C202.

This sequence belongs to the somatotropin/prolactin family.

The protein resides in the secreted. Functionally, growth hormone plays an important role in growth control and is involved in the regulation of several anabolic processes. Implicated as an osmoregulatory substance important for seawater adaptation. The sequence is that of Somatotropin (gh) from Morone saxatilis (Striped bass).